A 632-amino-acid polypeptide reads, in one-letter code: FAD-binding monooxygenase ausB (632 aa).

The disordered stretch occupies residues 1–50; that stretch reads MASAPEVESVKTPDPASTKTQHTSIAEIHTADQTWNNESNTRLPPNHRHH. Polar residues-rich tracts occupy residues 15-24 and 31-43; these read PASTKTQHTS and ADQT…NTRL. Residues 116–119, 128–129, and Tyr134 contribute to the FAD site; these read TWYW and DI. 126-128 is an NADP(+) binding site; that stretch reads MCD. Residues 269–275 and 292–293 contribute to the NADP(+) site; these read TGSTAIQ and RT.

The protein belongs to the FAD-binding monooxygenase family. FAD serves as cofactor.

It carries out the reaction protoaustinoid A + AH2 + O2 = berkeleyone A + A + H2O. Its pathway is secondary metabolite biosynthesis; terpenoid biosynthesis. In terms of biological role, FAD-binding monooxygenase; part of the gene cluster that mediates the biosynthesis of calidodehydroaustin, a fungal meroterpenoid. The first step of the pathway is the synthesis of 3,5-dimethylorsellinic acid by the polyketide synthase ausA. 3,5-dimethylorsellinic acid is then prenylated by the polyprenyl transferase ausN. Further epoxidation by the FAD-dependent monooxygenase ausM and cyclization by the probable terpene cyclase ausL lead to the formation of protoaustinoid A. Protoaustinoid A is then oxidized to spiro-lactone preaustinoid A3 by the combined action of the FAD-binding monooxygenases ausB and ausC, and the dioxygenase ausE. Acid-catalyzed keto-rearrangement and ring contraction of the tetraketide portion of preaustinoid A3 by ausJ lead to the formation of preaustinoid A4. The aldo-keto reductase ausK, with the help of ausH, is involved in the next step by transforming preaustinoid A4 into isoaustinone which is in turn hydroxylated by the P450 monooxygenase ausI to form austinolide. The cytochrome P450 monooxygenase ausG modifies austinolide to austinol. Austinol is further acetylated to austin by the O-acetyltransferase ausP, which spontaneously changes to dehydroaustin. The cytochrome P450 monooxygenase ausR then converts dehydroaustin is into 7-dehydrodehydroaustin. The hydroxylation catalyzed by ausR permits the O-acetyltransferase ausQ to add an additional acetyl group to the molecule, leading to the formation of acetoxydehydroaustin. The short chain dehydrogenase ausT catalyzes the reduction of the double bond present between carbon atoms 1 and 2 to convert 7-dehydrodehydroaustin into 1,2-dihydro-7-hydroxydehydroaustin. AusQ catalyzes not only an acetylation reaction but also the addition of the PKS ausV diketide product to 1,2-dihydro-7-hydroxydehydroaustin, forming precalidodehydroaustin. Finally, the iron/alpha-ketoglutarate-dependent dioxygenase converts precalidodehydroaustin into calidodehydroaustin. The chain is FAD-binding monooxygenase ausB from Aspergillus calidoustus.